The primary structure comprises 194 residues: MQSQYPSAHAPTADEAMLWNREALPPGPGQEAVLRGITGEMADKGFVVANLDKLVNWARTGSLWPMTFGLACCAVEMIHAYMPRYDLDRFGVIPRASPRQSDVMIVAGTLTNKMAPALRRVYDQMPEPRWVISMGSCANGGGYYHYSYSVVRGCDRIVPVDVYVPGCPPTAEALVYGIMQLQKKIRRTGTILRG.

Positions 72, 73, 137, and 167 each coordinate [4Fe-4S] cluster.

It belongs to the complex I 20 kDa subunit family. NDH-1 is composed of 14 different subunits. Subunits NuoB, C, D, E, F, and G constitute the peripheral sector of the complex. [4Fe-4S] cluster serves as cofactor.

It is found in the cell inner membrane. The catalysed reaction is a quinone + NADH + 5 H(+)(in) = a quinol + NAD(+) + 4 H(+)(out). Its function is as follows. NDH-1 shuttles electrons from NADH, via FMN and iron-sulfur (Fe-S) centers, to quinones in the respiratory chain. Couples the redox reaction to proton translocation (for every two electrons transferred, four hydrogen ions are translocated across the cytoplasmic membrane), and thus conserves the redox energy in a proton gradient. The sequence is that of NADH-quinone oxidoreductase subunit B from Granulibacter bethesdensis (strain ATCC BAA-1260 / CGDNIH1).